We begin with the raw amino-acid sequence, 473 residues long: GTPase Der (473 aa).

2 consecutive EngA-type G domains span residues 3–167 (FKVA…KGLE) and 203–378 (LRVA…TFWN). GTP-binding positions include 9-16 (GRPNVGKS), 56-60 (DTAGL), 119-122 (NKCE), 209-216 (GRPNVGKS), 256-260 (DTAGM), and 321-324 (NKWD). The KH-like domain occupies 379-463 (ARVPTARLNR…PIRLFMRKTH (85 aa)).

The protein belongs to the TRAFAC class TrmE-Era-EngA-EngB-Septin-like GTPase superfamily. EngA (Der) GTPase family. As to quaternary structure, associates with the 50S ribosomal subunit.

Functionally, GTPase that plays an essential role in the late steps of ribosome biogenesis. In Parvibaculum lavamentivorans (strain DS-1 / DSM 13023 / NCIMB 13966), this protein is GTPase Der.